Consider the following 62-residue polypeptide: MRQVVKEGFKEEKNNRVAVWRLEVDYELATLYEAMQKENEEQIEQSKNKLERLRKEWIRLNG.

Residues Y26–G62 adopt a coiled-coil conformation.

This is an uncharacterized protein from Bacillus subtilis (strain 168).